We begin with the raw amino-acid sequence, 287 residues long: Inorganic pyrophosphatase (287 aa).

Diphosphate is bound at residue R79. D116, D121, and D153 together coordinate Mg(2+).

It belongs to the PPase family. Requires Mg(2+) as cofactor.

Its subcellular location is the cytoplasm. It catalyses the reaction diphosphate + H2O = 2 phosphate + H(+). The sequence is that of Inorganic pyrophosphatase (IPP1) from Eremothecium gossypii (strain ATCC 10895 / CBS 109.51 / FGSC 9923 / NRRL Y-1056) (Yeast).